The chain runs to 943 residues: Isoleucine--tRNA ligase (943 aa).

The 'HIGH' region motif lies at 59-69 (PYANGQIHLGH). E577 lines the L-isoleucyl-5'-AMP pocket. The short motif at 618–622 (KMSKS) is the 'KMSKS' region element. K621 contacts ATP. Positions 906, 909, 926, and 929 each coordinate Zn(2+).

This sequence belongs to the class-I aminoacyl-tRNA synthetase family. IleS type 1 subfamily. In terms of assembly, monomer. Zn(2+) serves as cofactor.

It localises to the cytoplasm. It carries out the reaction tRNA(Ile) + L-isoleucine + ATP = L-isoleucyl-tRNA(Ile) + AMP + diphosphate. In terms of biological role, catalyzes the attachment of isoleucine to tRNA(Ile). As IleRS can inadvertently accommodate and process structurally similar amino acids such as valine, to avoid such errors it has two additional distinct tRNA(Ile)-dependent editing activities. One activity is designated as 'pretransfer' editing and involves the hydrolysis of activated Val-AMP. The other activity is designated 'posttransfer' editing and involves deacylation of mischarged Val-tRNA(Ile). In Xanthomonas axonopodis pv. citri (strain 306), this protein is Isoleucine--tRNA ligase.